A 360-amino-acid polypeptide reads, in one-letter code: tRNA-specific 2-thiouridylase MnmA (360 aa).

Residues 9-16 (AMSGGVDS) and Leu35 contribute to the ATP site. The active-site Nucleophile is the Cys104. Residues Cys104 and Cys197 are joined by a disulfide bond. Residue Gly128 participates in ATP binding. The segment at 147–149 (KDQ) is interaction with tRNA. Residue Cys197 is the Cysteine persulfide intermediate of the active site.

The protein belongs to the MnmA/TRMU family.

It localises to the cytoplasm. The catalysed reaction is S-sulfanyl-L-cysteinyl-[protein] + uridine(34) in tRNA + AH2 + ATP = 2-thiouridine(34) in tRNA + L-cysteinyl-[protein] + A + AMP + diphosphate + H(+). Catalyzes the 2-thiolation of uridine at the wobble position (U34) of tRNA, leading to the formation of s(2)U34. This chain is tRNA-specific 2-thiouridylase MnmA, found in Salinispora tropica (strain ATCC BAA-916 / DSM 44818 / JCM 13857 / NBRC 105044 / CNB-440).